The chain runs to 335 residues: Nucleoid-associated protein YejK (335 aa).

It belongs to the YejK family.

The protein resides in the cytoplasm. Its subcellular location is the nucleoid. This is Nucleoid-associated protein YejK from Escherichia coli (strain K12 / MC4100 / BW2952).